A 497-amino-acid chain; its full sequence is IWS1-like protein (497 aa).

A disordered region spans residues 1–191 (MSDHEGASPA…SDRRGGRNFE (191 aa)). 2 stretches are compositionally biased toward low complexity: residues 7–23 (ASPA…PVSP) and 47–57 (PLAPRSPASPR). 3 stretches are compositionally biased toward basic and acidic residues: residues 123 to 134 (EGDKQQKRKDLF), 144 to 160 (DRPK…VKGD), and 181 to 191 (PSDRRGGRNFE). Positions 281–361 (SALSEWLAPL…GEWARPIYHL (81 aa)) constitute a TFIIS N-terminal domain. The disordered stretch occupies residues 369–433 (SRQEREERDY…GDKGYINRAR (65 aa)). Composition is skewed to basic and acidic residues over residues 370–382 (RQER…SRMP) and 401–411 (APKRPRIRDAE).

The protein belongs to the IWS1 family.

Its subcellular location is the nucleus. This Caenorhabditis briggsae protein is IWS1-like protein.